Here is a 107-residue protein sequence, read N- to C-terminus: Pyrimidine/purine nucleoside phosphorylase (107 aa).

This sequence belongs to the nucleoside phosphorylase PpnP family.

The enzyme catalyses a purine D-ribonucleoside + phosphate = a purine nucleobase + alpha-D-ribose 1-phosphate. The catalysed reaction is adenosine + phosphate = alpha-D-ribose 1-phosphate + adenine. It catalyses the reaction cytidine + phosphate = cytosine + alpha-D-ribose 1-phosphate. It carries out the reaction guanosine + phosphate = alpha-D-ribose 1-phosphate + guanine. The enzyme catalyses inosine + phosphate = alpha-D-ribose 1-phosphate + hypoxanthine. The catalysed reaction is thymidine + phosphate = 2-deoxy-alpha-D-ribose 1-phosphate + thymine. It catalyses the reaction uridine + phosphate = alpha-D-ribose 1-phosphate + uracil. It carries out the reaction xanthosine + phosphate = alpha-D-ribose 1-phosphate + xanthine. Functionally, catalyzes the phosphorolysis of diverse nucleosides, yielding D-ribose 1-phosphate and the respective free bases. Can use uridine, adenosine, guanosine, cytidine, thymidine, inosine and xanthosine as substrates. Also catalyzes the reverse reactions. The protein is Pyrimidine/purine nucleoside phosphorylase of Azoarcus sp. (strain BH72).